Reading from the N-terminus, the 478-residue chain is Proline--tRNA ligase (478 aa).

This sequence belongs to the class-II aminoacyl-tRNA synthetase family. ProS type 3 subfamily. In terms of assembly, homodimer.

The protein localises to the cytoplasm. It catalyses the reaction tRNA(Pro) + L-proline + ATP = L-prolyl-tRNA(Pro) + AMP + diphosphate. In terms of biological role, catalyzes the attachment of proline to tRNA(Pro) in a two-step reaction: proline is first activated by ATP to form Pro-AMP and then transferred to the acceptor end of tRNA(Pro). This Ruminiclostridium cellulolyticum (strain ATCC 35319 / DSM 5812 / JCM 6584 / H10) (Clostridium cellulolyticum) protein is Proline--tRNA ligase.